The primary structure comprises 137 residues: Lysozyme (137 aa).

Residues 1–20 form the signal peptide; sequence MQRLLGSIVILATVFTFCEA. The region spanning 21–135 is the I-type lysozyme domain; the sequence is TISSACLRCI…EKVHQQGCNV (115 aa). Cystine bridges form between Cys-26–Cys-102, Cys-31–Cys-37, Cys-42–Cys-51, Cys-64–Cys-84, Cys-74–Cys-80, and Cys-98–Cys-116. Catalysis depends on Glu-34, which acts as the Proton donor. Asp-45 (nucleophile) is an active-site residue. Residue 57-63 participates in substrate binding; that stretch reads KENYWED. Substrate-binding positions include Tyr-88 and 109–111; that span reads HNG.

This sequence belongs to the glycosyl hydrolase 22 family. Type-I lysozyme subfamily. Expressed in the basophil cells of the oyster digestive gland.

The protein resides in the secreted. It catalyses the reaction Hydrolysis of (1-&gt;4)-beta-linkages between N-acetylmuramic acid and N-acetyl-D-glucosamine residues in a peptidoglycan and between N-acetyl-D-glucosamine residues in chitodextrins.. In terms of biological role, has bacteriolytic activity. May play a role in digestion and in the host defense mechanisms against invading microbes. The protein is Lysozyme (lysoz) of Magallana gigas (Pacific oyster).